Here is a 96-residue protein sequence, read N- to C-terminus: Large ribosomal subunit protein uL23 (96 aa).

Belongs to the universal ribosomal protein uL23 family. In terms of assembly, part of the 50S ribosomal subunit. Contacts protein L29, and trigger factor when it is bound to the ribosome.

One of the early assembly proteins it binds 23S rRNA. One of the proteins that surrounds the polypeptide exit tunnel on the outside of the ribosome. Forms the main docking site for trigger factor binding to the ribosome. This Aster yellows witches'-broom phytoplasma (strain AYWB) protein is Large ribosomal subunit protein uL23.